We begin with the raw amino-acid sequence, 123 residues long: Fluoride-specific ion channel FluC 2 (123 aa).

2 helical membrane passes run 1-21 (MTMLWVCLAGGLGAVARFLLD) and 30-50 (VPVPLGTLVINVMGSLLLGLI). Na(+) is bound by residues Gly-74 and Thr-77. A helical transmembrane segment spans residues 99–119 (ALHCMGMAIAGVLAAILGLAL).

Belongs to the fluoride channel Fluc/FEX (TC 1.A.43) family.

The protein resides in the cell membrane. It carries out the reaction fluoride(in) = fluoride(out). Its activity is regulated as follows. Na(+) is not transported, but it plays an essential structural role and its presence is essential for fluoride channel function. Functionally, fluoride-specific ion channel. Important for reducing fluoride concentration in the cell, thus reducing its toxicity. The chain is Fluoride-specific ion channel FluC 2 from Cutibacterium acnes (strain DSM 16379 / KPA171202) (Propionibacterium acnes).